A 162-amino-acid polypeptide reads, in one-letter code: SCF ubiquitin ligase complex protein SKP1b (162 aa).

The residue at position 2 (S2) is an N-acetylserine. Residues 100 to 162 (ILAANYLDIK…NEWCEDKGGN (63 aa)) are interaction with the F-box domain of F-box proteins. A 4-hydroxyproline modification is found at P143. P143 carries an O-linked (GlcNAc...) hydroxyproline glycan.

This sequence belongs to the SKP1 family. Multiprotein complex (SCF) with cullin and F-box-containing protein. Capable of undergoing aggregation. In terms of processing, O-linked glycan consists of linear Gal-Gal-Fuc-Gal-GlcNAc. Not glycosylated in prespore cells. Post-translationally, fpaA and fpaB seem to be identically glycosylated. Glycosylation is required for nuclear enrichment. In terms of processing, hydroxylated by phyA.

The protein localises to the cytoplasm. It is found in the nucleus. This is SCF ubiquitin ligase complex protein SKP1b (fpaB-1) from Dictyostelium discoideum (Social amoeba).